A 66-amino-acid chain; its full sequence is Heat-stable enterotoxin (66 aa).

The signal sequence occupies residues 1–19 (MKKIVFVLVLMLSSFGTFG). Residues 20–50 (QETASRQFGDAFSTPIAAEVNKKACDTELPP) constitute a propeptide that is removed on maturation. 3 disulfides stabilise this stretch: cysteine 54-cysteine 59, cysteine 55-cysteine 63, and cysteine 58-cysteine 66.

This sequence belongs to the heat-stable enterotoxin family.

The protein localises to the secreted. Functionally, toxin which activates the particulate form of guanylate cyclase and increases cyclic GMP levels within the host intestinal epithelial cells. The polypeptide is Heat-stable enterotoxin (yst) (Yersinia kristensenii).